A 580-amino-acid chain; its full sequence is F-box only protein 24 (580 aa).

Residues 36–82 (PISIQLFPPELVEHIISFLPVRDLVALGQTCRYFHEVCDGEGVWRRI) form the F-box domain. The RCC1 repeat unit spans residues 376–425 (GRIFMQGNNRYGQLGTGDKMDRGEPTQVCYLQRPITLWCGLNHSLVLSQS).

As to quaternary structure, directly interacts with SKP1 and CUL1.

In terms of biological role, substrate-recognition component of the SCF (SKP1-CUL1-F-box protein)-type E3 ubiquitin ligase complex. This Homo sapiens (Human) protein is F-box only protein 24 (FBXO24).